The sequence spans 185 residues: Ribosome-recycling factor (185 aa).

It belongs to the RRF family.

The protein localises to the cytoplasm. In terms of biological role, responsible for the release of ribosomes from messenger RNA at the termination of protein biosynthesis. May increase the efficiency of translation by recycling ribosomes from one round of translation to another. The polypeptide is Ribosome-recycling factor (Pseudomonas putida (strain W619)).